The following is a 233-amino-acid chain: Large ribosomal subunit protein uL1 (233 aa).

This sequence belongs to the universal ribosomal protein uL1 family. Part of the 50S ribosomal subunit.

In terms of biological role, binds directly to 23S rRNA. The L1 stalk is quite mobile in the ribosome, and is involved in E site tRNA release. Protein L1 is also a translational repressor protein, it controls the translation of the L11 operon by binding to its mRNA. The polypeptide is Large ribosomal subunit protein uL1 (Deinococcus geothermalis (strain DSM 11300 / CIP 105573 / AG-3a)).